A 385-amino-acid polypeptide reads, in one-letter code: Prophage integrase IntS (385 aa).

The Core-binding (CB) domain occupies 91–172 (NSFSAIYKEW…RCGEVFRYAI (82 aa)). Residues 195-373 (KNFPFLPADQ…QYLDKRREMM (179 aa)) form the Tyr recombinase domain. Residues arginine 234, lysine 261, histidine 324, arginine 327, and histidine 350 contribute to the active site. Tyrosine 360 acts as the O-(3'-phospho-DNA)-tyrosine intermediate in catalysis.

This sequence belongs to the 'phage' integrase family.

Its function is as follows. Integrase is necessary for integration of the phage into the host genome by site-specific recombination. In conjunction with excisionase, integrase is also necessary for excision of the prophage from the host genome. The chain is Prophage integrase IntS (intS) from Escherichia coli (strain K12).